A 140-amino-acid polypeptide reads, in one-letter code: 3-hydroxyacyl-[acyl-carrier-protein] dehydratase FabZ (140 aa).

Residue His-48 is part of the active site.

This sequence belongs to the thioester dehydratase family. FabZ subfamily.

The protein localises to the cytoplasm. The enzyme catalyses a (3R)-hydroxyacyl-[ACP] = a (2E)-enoyl-[ACP] + H2O. In terms of biological role, involved in unsaturated fatty acids biosynthesis. Catalyzes the dehydration of short chain beta-hydroxyacyl-ACPs and long chain saturated and unsaturated beta-hydroxyacyl-ACPs. This Pelotomaculum thermopropionicum (strain DSM 13744 / JCM 10971 / SI) protein is 3-hydroxyacyl-[acyl-carrier-protein] dehydratase FabZ.